A 375-amino-acid chain; its full sequence is Trichodiene synthase (375 aa).

It belongs to the trichodiene synthase family.

The catalysed reaction is (2E,6E)-farnesyl diphosphate = trichodiene + diphosphate. It functions in the pathway sesquiterpene biosynthesis; trichothecene biosynthesis. Its function is as follows. TS is a member of the terpene cyclase group of enzymes. It catalyzes the isomerization and cyclization of farnesyl pyro-phosphate to form trichodiene, the first cyclic intermediate in the biosynthetic pathway for trichothecenes. It serves to branch trichothecene biosynthesis from the isoprenoid pathway. This is Trichodiene synthase (TRI5) from Fusarium mesoamericanum.